The chain runs to 460 residues: Kynurenine 3-monooxygenase (460 aa).

FAD-binding positions include V13, 32 to 34 (DFR), and A53. R83 and Y97 together coordinate L-kynurenine. FAD is bound by residues R109, L133, Y195, D314, and 325–328 (QGMN). L-kynurenine-binding residues include N373 and Y408.

Belongs to the aromatic-ring hydroxylase family. KMO subfamily. It depends on FAD as a cofactor.

The protein localises to the mitochondrion outer membrane. It catalyses the reaction L-kynurenine + NADPH + O2 + H(+) = 3-hydroxy-L-kynurenine + NADP(+) + H2O. The protein operates within cofactor biosynthesis; NAD(+) biosynthesis; quinolinate from L-kynurenine: step 1/3. Its function is as follows. Catalyzes the hydroxylation of L-kynurenine (L-Kyn) to form 3-hydroxy-L-kynurenine (L-3OHKyn). Required for synthesis of quinolinic acid. This is Kynurenine 3-monooxygenase from Saccharomyces cerevisiae (strain ATCC 204508 / S288c) (Baker's yeast).